The following is a 291-amino-acid chain: uncharacterized protein (291 aa).

Residues 191–289 (KQMLNWIHLH…NMTPLSYKKM (99 aa)) form the HTH araC/xylS-type domain. DNA-binding regions (H-T-H motif) lie at residues 208–229 (EDIA…KRML) and 256–279 (VTEV…QQAM).

This is an uncharacterized protein from Bacillus subtilis (strain 168).